We begin with the raw amino-acid sequence, 230 residues long: UPF0173 metal-dependent hydrolase Rsph17029_0942 (230 aa).

This sequence belongs to the UPF0173 family.

The sequence is that of UPF0173 metal-dependent hydrolase Rsph17029_0942 from Cereibacter sphaeroides (strain ATCC 17029 / ATH 2.4.9) (Rhodobacter sphaeroides).